Here is a 387-residue protein sequence, read N- to C-terminus: 2-deoxystreptamine glucosyltransferase (387 aa).

Belongs to the glycosyltransferase group 1 family.

The catalysed reaction is 2-deoxystreptamine + UDP-N-acetyl-alpha-D-glucosamine = 2'-N-acetylparomamine + UDP + H(+). It catalyses the reaction 2-deoxystreptamine + UDP-alpha-D-glucose = 2'-deamino-2'-hydroxyparomamine + UDP + H(+). It participates in antibiotic biosynthesis; kanamycin biosynthesis. Functionally, glycosyltransferase involved in the biosynthesis of kanamycin by mediating conversion of 2-deoxystreptamine (2-DOS) to 2'-N-acetylparomamine using UDP-alpha-D-glucose as sugar donor. Can also accept UDP-alpha-D-glucosamine, but with a much lower activity compared to UDP-alpha-D-glucose. This chain is 2-deoxystreptamine glucosyltransferase (kanF), found in Streptomyces kanamyceticus.